Reading from the N-terminus, the 728-residue chain is Golgin subfamily A member 5 (728 aa).

Ser2 carries the post-translational modification N-acetylserine. The Cytoplasmic segment spans residues 2–695; the sequence is SWFADLAGRA…IFLRRYPIAR (694 aa). Dimethylated arginine occurs at positions 27 and 89. Residues 88 to 202 are disordered; that stretch reads SRTGGDASHP…KKSTEESTVS (115 aa). The residue at position 116 (Ser116) is a Phosphoserine. The span at 134–146 shows a compositional bias: basic and acidic residues; sequence PTGRVEIKKEKGK. Residues 152 to 167 are compositionally biased toward low complexity; the sequence is SSQSSAVSSVTTSVTT. Over residues 173–187 the composition is skewed to polar residues; it reads ENSGSQSPEVSSSDS. Positions 216-628 form a coiled coil; that stretch reads GSMSHELSNL…LEQQLHSAAT (413 aa). Residues 696–716 form a helical; Anchor for type IV membrane protein membrane-spanning segment; sequence VFVIIYMALLHLWVMIVLLTY. Residues 717–728 lie on the Lumenal side of the membrane; it reads SPEMHHDQPYGK.

In terms of assembly, homodimer. Interacts with RAB1A that has been activated by GTP-binding. Interacts with isoform CASP of CUX1. Post-translationally, highly phosphorylated during mitosis. Phosphorylation is barely detectable during interphase.

The protein localises to the golgi apparatus membrane. In terms of biological role, involved in maintaining Golgi structure. Stimulates the formation of Golgi stacks and ribbons. Involved in intra-Golgi retrograde transport. This Rattus norvegicus (Rat) protein is Golgin subfamily A member 5 (Golga5).